An 826-amino-acid chain; its full sequence is Arsenite oxidase subunit AioA (826 aa).

[3Fe-4S] cluster is bound by residues Cys22, Cys25, and Cys29. Substrate-binding residues include His196, Glu204, Arg420, and His424.

The protein belongs to the prokaryotic molybdopterin-containing oxidoreductase family. In terms of assembly, heterodimer consisting of a large and a small subunit. [3Fe-4S] cluster serves as cofactor. Mo-bis(molybdopterin guanine dinucleotide) is required as a cofactor.

It carries out the reaction 2 oxidized [azurin] + arsenite + H2O = 2 reduced [azurin] + arsenate + 3 H(+). Its function is as follows. Involved in the detoxification of arsenic. Oxidizes As(III)O3(3-) (arsenite) to the somewhat less toxic As(V)O4(3-) (arsenate). This is Arsenite oxidase subunit AioA (aioA) from Alcaligenes faecalis.